Here is a 459-residue protein sequence, read N- to C-terminus: tRNA modification GTPase MnmE (459 aa).

3 residues coordinate (6S)-5-formyl-5,6,7,8-tetrahydrofolate: Arg29, Glu91, and Arg130. Positions 225–381 (GVKVAIVGRP…LEEALEQLVT (157 aa)) constitute a TrmE-type G domain. Residue Asn235 coordinates K(+). GTP is bound by residues 235-240 (NVGKSS), 254-260 (TDLPGTT), and 279-282 (DTAG). Ser239 contributes to the Mg(2+) binding site. Positions 254, 256, and 259 each coordinate K(+). Thr260 contacts Mg(2+). Residue Lys459 coordinates (6S)-5-formyl-5,6,7,8-tetrahydrofolate.

The protein belongs to the TRAFAC class TrmE-Era-EngA-EngB-Septin-like GTPase superfamily. TrmE GTPase family. As to quaternary structure, homodimer. Heterotetramer of two MnmE and two MnmG subunits. The cofactor is K(+).

The protein resides in the cytoplasm. In terms of biological role, exhibits a very high intrinsic GTPase hydrolysis rate. Involved in the addition of a carboxymethylaminomethyl (cmnm) group at the wobble position (U34) of certain tRNAs, forming tRNA-cmnm(5)s(2)U34. This Synechococcus sp. (strain JA-2-3B'a(2-13)) (Cyanobacteria bacterium Yellowstone B-Prime) protein is tRNA modification GTPase MnmE.